A 372-amino-acid polypeptide reads, in one-letter code: Glutamate 5-kinase (372 aa).

K14 provides a ligand contact to ATP. Residues S55, D142, and N154 each contribute to the substrate site. Residues 174–175 (SD) and 216–222 (TGGMETK) each bind ATP. One can recognise a PUA domain in the interval 279-357 (QGSIIVDLGA…WEIADVLGHK (79 aa)).

It belongs to the glutamate 5-kinase family.

It is found in the cytoplasm. The enzyme catalyses L-glutamate + ATP = L-glutamyl 5-phosphate + ADP. The protein operates within amino-acid biosynthesis; L-proline biosynthesis; L-glutamate 5-semialdehyde from L-glutamate: step 1/2. Catalyzes the transfer of a phosphate group to glutamate to form L-glutamate 5-phosphate. In Carboxydothermus hydrogenoformans (strain ATCC BAA-161 / DSM 6008 / Z-2901), this protein is Glutamate 5-kinase.